A 363-amino-acid polypeptide reads, in one-letter code: Uroporphyrinogen decarboxylase (363 aa).

Substrate contacts are provided by residues 27 to 31 (RQAGR), Asp77, Tyr157, Thr212, and His333.

Belongs to the uroporphyrinogen decarboxylase family. Homodimer.

The protein resides in the cytoplasm. The enzyme catalyses uroporphyrinogen III + 4 H(+) = coproporphyrinogen III + 4 CO2. It functions in the pathway porphyrin-containing compound metabolism; protoporphyrin-IX biosynthesis; coproporphyrinogen-III from 5-aminolevulinate: step 4/4. Catalyzes the decarboxylation of four acetate groups of uroporphyrinogen-III to yield coproporphyrinogen-III. In Cupriavidus pinatubonensis (strain JMP 134 / LMG 1197) (Cupriavidus necator (strain JMP 134)), this protein is Uroporphyrinogen decarboxylase.